The primary structure comprises 253 residues: rRNA adenine N-6-methyltransferase (253 aa).

Positions 14, 16, 40, 61, 85, and 101 each coordinate S-adenosyl-L-methionine. Residues 229–253 (CAREESTPRPYLPDCTPTTGSISSR) form a disordered region. Positions 244–253 (TPTTGSISSR) are enriched in polar residues.

The protein belongs to the class I-like SAM-binding methyltransferase superfamily. rRNA adenine N(6)-methyltransferase family.

Involved in erythromycin resistance. In Corynebacterium diphtheriae, this protein is rRNA adenine N-6-methyltransferase (ermA).